Reading from the N-terminus, the 128-residue chain is Transcription antitermination protein NusB (128 aa).

The protein belongs to the NusB family.

Involved in transcription antitermination. Required for transcription of ribosomal RNA (rRNA) genes. Binds specifically to the boxA antiterminator sequence of the ribosomal RNA (rrn) operons. The polypeptide is Transcription antitermination protein NusB (Staphylococcus haemolyticus (strain JCSC1435)).